The sequence spans 206 residues: Large ribosomal subunit protein mL62 (206 aa).

A mitochondrion-targeting transit peptide spans 1 to 29 (MATAWCLPWTLRRAGAWLLTPPLRCPRRA).

Belongs to the prokaryotic/mitochondrial release factor family. Mitochondrion-specific ribosomal protein mL62 subfamily. Component of the mitochondrial 39S ribosomal subunit.

Its subcellular location is the mitochondrion. The catalysed reaction is an N-acyl-L-alpha-aminoacyl-tRNA + H2O = an N-acyl-L-amino acid + a tRNA + H(+). In terms of biological role, essential peptidyl-tRNA hydrolase component of the mitochondrial large ribosomal subunit. Acts as a codon-independent translation release factor that has lost all stop codon specificity and directs the termination of translation in mitochondrion, possibly in case of abortive elongation. May be involved in the hydrolysis of peptidyl-tRNAs that have been prematurely terminated and thus in the recycling of stalled mitochondrial ribosomes. The protein is Large ribosomal subunit protein mL62 of Ailuropoda melanoleuca (Giant panda).